A 433-amino-acid polypeptide reads, in one-letter code: MPQFLDSRQPDFETAFTALLGAKREDSPDVDAVVAGIIADVRARGDAAVIELTERFDRVALTPQSLRFSTEEIAQAVDEVPAPERAALELAAARIRAYHERQMPQDADWTDDTGARLGWRWSAVSAAGLYVPGGLASYPSSVLMNAIPAKVAGVGRLAIAVPTPDGQVNPLVLLAAQISGVDEVYRIGGAQAIAALAYGTDTIAPVDKITGPGNAFVAAAKRRVFGKVGIDMIAGPSEILVIADRDNDPDWIALDLLSQAEHDESAQSILITDDAAFGRAVAEAVDKRLETLERRAIAGVSWRDFGAVITVSDLDEAAALSNRIAPEHLELCVSDPEALAARTIHAGAIFLGQYTPEAIGDYVGGPNHVLPTARSARFSSGLSVMDFLKRTTMSRMTPEALRAIGPAAAQLARSESLEAHGLSVQARLDRLNG.

Residues Tyr130, Gln191, and Asn214 each contribute to the NAD(+) site. 3 residues coordinate substrate: Ser237, Gln259, and His262. The Zn(2+) site is built by Gln259 and His262. Catalysis depends on proton acceptor residues Glu327 and His328. Positions 328, 361, 415, and 420 each coordinate substrate. Position 361 (Asp361) interacts with Zn(2+). His420 provides a ligand contact to Zn(2+).

It belongs to the histidinol dehydrogenase family. Requires Zn(2+) as cofactor.

The catalysed reaction is L-histidinol + 2 NAD(+) + H2O = L-histidine + 2 NADH + 3 H(+). Its pathway is amino-acid biosynthesis; L-histidine biosynthesis; L-histidine from 5-phospho-alpha-D-ribose 1-diphosphate: step 9/9. Functionally, catalyzes the sequential NAD-dependent oxidations of L-histidinol to L-histidinaldehyde and then to L-histidine. The sequence is that of Histidinol dehydrogenase from Ruegeria pomeroyi (strain ATCC 700808 / DSM 15171 / DSS-3) (Silicibacter pomeroyi).